We begin with the raw amino-acid sequence, 1391 residues long: DNA-directed RNA polymerase subunit beta (1391 aa).

This sequence belongs to the RNA polymerase beta chain family. In terms of assembly, the RNAP catalytic core consists of 2 alpha, 1 beta, 1 beta' and 1 omega subunit. When a sigma factor is associated with the core the holoenzyme is formed, which can initiate transcription.

The enzyme catalyses RNA(n) + a ribonucleoside 5'-triphosphate = RNA(n+1) + diphosphate. Its function is as follows. DNA-dependent RNA polymerase catalyzes the transcription of DNA into RNA using the four ribonucleoside triphosphates as substrates. The chain is DNA-directed RNA polymerase subunit beta from Paramagnetospirillum magneticum (strain ATCC 700264 / AMB-1) (Magnetospirillum magneticum).